Here is a 491-residue protein sequence, read N- to C-terminus: Angiopoietin-related protein 1 (491 aa).

The N-terminal stretch at 1–23 is a signal peptide; the sequence is MKTFTWTLGVLFFLLVDTGHCRG. Residues 80–168 are a coiled coil; sequence ITRMDLENLK…LNVTTEMLKM (89 aa). Residues asparagine 160 and asparagine 188 are each glycosylated (N-linked (GlcNAc...) asparagine). Positions 271–491 constitute a Fibrinogen C-terminal domain; it reads FINEGPFKDC…AVQMMIKPID (221 aa). Intrachain disulfides connect cysteine 280–cysteine 309 and cysteine 432–cysteine 445.

In terms of tissue distribution, highly expressed in adrenal gland, placenta, thyroid gland, heart, skeletal muscle and small intestine. Weakly expressed in testis, ovary, colon, pancreas, kidney and stomach.

It is found in the secreted. This Homo sapiens (Human) protein is Angiopoietin-related protein 1 (ANGPTL1).